We begin with the raw amino-acid sequence, 227 residues long: Cytochrome c oxidase subunit 2 (227 aa).

Residues 1–14 (MAYPFQLGLQDATS) are Mitochondrial intermembrane-facing. A helical transmembrane segment spans residues 15-45 (PIMEELLHFHDHTLMIVFLISSLVLYIITLM). Over 46–59 (LTTKLTHTSTMDAQ) the chain is Mitochondrial matrix. The chain crosses the membrane as a helical span at residues 60-87 (EVETVWTILPAIILILIALPSLRILYMM). Residues 88 to 227 (DEINNPSLTV…YFETWSAVMV (140 aa)) are Mitochondrial intermembrane-facing. Histidine 161, cysteine 196, glutamate 198, cysteine 200, histidine 204, and methionine 207 together coordinate Cu cation. Glutamate 198 is a Mg(2+) binding site. Position 218 is a phosphotyrosine (tyrosine 218).

Belongs to the cytochrome c oxidase subunit 2 family. Component of the cytochrome c oxidase (complex IV, CIV), a multisubunit enzyme composed of 14 subunits. The complex is composed of a catalytic core of 3 subunits MT-CO1, MT-CO2 and MT-CO3, encoded in the mitochondrial DNA, and 11 supernumerary subunits COX4I, COX5A, COX5B, COX6A, COX6B, COX6C, COX7A, COX7B, COX7C, COX8 and NDUFA4, which are encoded in the nuclear genome. The complex exists as a monomer or a dimer and forms supercomplexes (SCs) in the inner mitochondrial membrane with NADH-ubiquinone oxidoreductase (complex I, CI) and ubiquinol-cytochrome c oxidoreductase (cytochrome b-c1 complex, complex III, CIII), resulting in different assemblies (supercomplex SCI(1)III(2)IV(1) and megacomplex MCI(2)III(2)IV(2)). Found in a complex with TMEM177, COA6, COX18, COX20, SCO1 and SCO2. Interacts with TMEM177 in a COX20-dependent manner. Interacts with COX20. Interacts with COX16. Cu cation serves as cofactor.

It is found in the mitochondrion inner membrane. The enzyme catalyses 4 Fe(II)-[cytochrome c] + O2 + 8 H(+)(in) = 4 Fe(III)-[cytochrome c] + 2 H2O + 4 H(+)(out). Its function is as follows. Component of the cytochrome c oxidase, the last enzyme in the mitochondrial electron transport chain which drives oxidative phosphorylation. The respiratory chain contains 3 multisubunit complexes succinate dehydrogenase (complex II, CII), ubiquinol-cytochrome c oxidoreductase (cytochrome b-c1 complex, complex III, CIII) and cytochrome c oxidase (complex IV, CIV), that cooperate to transfer electrons derived from NADH and succinate to molecular oxygen, creating an electrochemical gradient over the inner membrane that drives transmembrane transport and the ATP synthase. Cytochrome c oxidase is the component of the respiratory chain that catalyzes the reduction of oxygen to water. Electrons originating from reduced cytochrome c in the intermembrane space (IMS) are transferred via the dinuclear copper A center (CU(A)) of subunit 2 and heme A of subunit 1 to the active site in subunit 1, a binuclear center (BNC) formed by heme A3 and copper B (CU(B)). The BNC reduces molecular oxygen to 2 water molecules using 4 electrons from cytochrome c in the IMS and 4 protons from the mitochondrial matrix. In Vulpes vulpes (Red fox), this protein is Cytochrome c oxidase subunit 2 (MT-CO2).